A 969-amino-acid chain; its full sequence is Alpha-glucosidase (969 aa).

The first 24 residues, 1-24 (MMISTAYQSLFLTALFSAISIAVG), serve as a signal peptide directing secretion. N-linked (GlcNAc...) asparagine glycosylation is found at N37, N67, N99, N116, N139, N146, N209, N245, N249, N331, N406, N429, N462, and N470. The active-site Nucleophile is the D481. Residue E484 is part of the active site. 3 N-linked (GlcNAc...) asparagine glycosylation sites follow: N520, N523, and N589. Residue D647 is the Proton donor of the active site. N-linked (GlcNAc...) asparagine glycans are attached at residues N648, N801, N810, N821, N885, N915, N934, N942, N954, and N966.

This sequence belongs to the glycosyl hydrolase 31 family.

The protein localises to the secreted. The catalysed reaction is Hydrolysis of terminal, non-reducing (1-&gt;4)-linked alpha-D-glucose residues with release of alpha-D-glucose.. In terms of biological role, hydrolyzes malto-oligosaccharides, but has a low activity toward soluble starch. The sequence is that of Alpha-glucosidase (agl1) from Schizosaccharomyces pombe (strain 972 / ATCC 24843) (Fission yeast).